A 56-amino-acid polypeptide reads, in one-letter code: Large ribosomal subunit protein bL33 (56 aa).

Positions 1–12 (MATKGGREKIKL) are enriched in basic and acidic residues. Residues 1–28 (MATKGGREKIKLESTAGTGHFYTTSKNK) form a disordered region. Positions 15–25 (TAGTGHFYTTS) are enriched in polar residues.

It belongs to the bacterial ribosomal protein bL33 family.

This is Large ribosomal subunit protein bL33 from Albidiferax ferrireducens (strain ATCC BAA-621 / DSM 15236 / T118) (Rhodoferax ferrireducens).